We begin with the raw amino-acid sequence, 317 residues long: Protein phosphatase 1 regulatory subunit 3C (317 aa).

The PP1-binding motif signature appears at 84 to 87 (RVVF). An interaction with EPM2A region spans residues 141–263 (PSSDYLSFRD…YRIVHVQWKP (123 aa)). Residues 149–257 (RDRFQKNFVC…NNEAQNYRIV (109 aa)) form the CBM21 domain.

In terms of assembly, interacts with PPP1CC catalytic subunit of PP1 and associates with glycogen. Forms complexes with glycogen phosphorylase, glycogen synthase and phosphorylase kinase which is necessary for its regulation of PP1 activity. Also interacts with EPM2A/laforin. Ubiquitinated by NHLRC1/malin in a EPM2A/laforin-dependent manner.

Its function is as follows. Acts as a glycogen-targeting subunit for PP1 and regulates its activity. Activates glycogen synthase, reduces glycogen phosphorylase activity and limits glycogen breakdown. Dramatically increases basal and insulin-stimulated glycogen synthesis upon overexpression in a variety of cell types. This is Protein phosphatase 1 regulatory subunit 3C from Rattus norvegicus (Rat).